A 76-amino-acid polypeptide reads, in one-letter code: Pigment-dispersing hormone A peptides (76 aa).

The signal sequence occupies residues 1 to 20 (MRSAMVVLVLVAMVAVFTRA). The residue at position 73 (Ala-73) is an Alanine amide.

The protein belongs to the arthropod PDH family. Optical ganglia of the eyestalk.

The protein resides in the secreted. In terms of biological role, the pigment-dispersing hormone causes the migration of the distal retinal pigment into the proximal end of the pigment chromatophore cells and thus decreases the amount of light entering the retinulas. May also function as a neurotransmitter and/or neuromodulator. The protein is Pigment-dispersing hormone A peptides of Faxonius limosus (Spinycheek crayfish).